Here is a 1187-residue protein sequence, read N- to C-terminus: Intraflagellar transport protein 122 homolog (1187 aa).

WD repeat units follow at residues 16–54, 57–97, 99–135, 137–175, 180–223, 225–264, 266–306, and 459–498; these read KVEQ…LIQP, GHKD…LKYT, NDSI…VSKH, VSSK…KVKI, GSSS…IGKD, SLTF…LGSI, EQNA…HGLY, and KQNT…LLFQ. The segment at 1070–1094 is disordered; that stretch reads KSWQEMSSGESQCLKLEDGPDDPED.

In terms of assembly, component of the IFT complex A (IFT-A) complex.

The protein localises to the cell projection. The protein resides in the cilium. Its subcellular location is the cytoplasm. It localises to the cytoskeleton. It is found in the cilium basal body. Its function is as follows. Required for cilia formation during embryonal development. Acts as a negative regulator of Shh signaling. The polypeptide is Intraflagellar transport protein 122 homolog (ift122) (Danio rerio (Zebrafish)).